The sequence spans 446 residues: 3-phosphoshikimate 1-carboxyvinyltransferase (446 aa).

Lys-27, Ser-28, and Arg-32 together coordinate 3-phosphoshikimate. Lys-27 provides a ligand contact to phosphoenolpyruvate. Phosphoenolpyruvate is bound by residues Gly-100 and Arg-128. Positions 177, 179, 330, and 357 each coordinate 3-phosphoshikimate. Phosphoenolpyruvate is bound at residue Gln-179. Asp-330 serves as the catalytic Proton acceptor. Phosphoenolpyruvate contacts are provided by Arg-361 and Arg-406.

The protein belongs to the EPSP synthase family. Monomer.

It is found in the cytoplasm. The catalysed reaction is 3-phosphoshikimate + phosphoenolpyruvate = 5-O-(1-carboxyvinyl)-3-phosphoshikimate + phosphate. The protein operates within metabolic intermediate biosynthesis; chorismate biosynthesis; chorismate from D-erythrose 4-phosphate and phosphoenolpyruvate: step 6/7. Functionally, catalyzes the transfer of the enolpyruvyl moiety of phosphoenolpyruvate (PEP) to the 5-hydroxyl of shikimate-3-phosphate (S3P) to produce enolpyruvyl shikimate-3-phosphate and inorganic phosphate. The sequence is that of 3-phosphoshikimate 1-carboxyvinyltransferase from Sphingopyxis alaskensis (strain DSM 13593 / LMG 18877 / RB2256) (Sphingomonas alaskensis).